The sequence spans 134 residues: Arsenate reductase (134 aa).

Residues Cys-11, Cys-83, and Cys-90 each act as nucleophile in the active site. 2 disulfide bridges follow: Cys-11/Cys-83 and Cys-83/Cys-90.

This sequence belongs to the low molecular weight phosphotyrosine protein phosphatase family. Thioredoxin-coupled ArsC subfamily.

The protein localises to the cytoplasm. It carries out the reaction arsenate + [thioredoxin]-dithiol + H(+) = arsenite + [thioredoxin]-disulfide + H2O. Catalyzes the reduction of arsenate [As(V)] to arsenite [As(III)]. The polypeptide is Arsenate reductase (Bacillus cereus (strain 03BB102)).